Consider the following 271-residue polypeptide: Phosphate import ATP-binding protein PstB (271 aa).

Residues 13-266 enclose the ABC transporter domain; it reads VRTAPVSEAE…PKHPYTEAYI (254 aa). ATP is bound at residue 57–64; that stretch reads GPSGCGKS.

Belongs to the ABC transporter superfamily. Phosphate importer (TC 3.A.1.7) family. The complex is composed of two ATP-binding proteins (PstB), two transmembrane proteins (PstC and PstA) and a solute-binding protein (PstS).

It localises to the cell inner membrane. The catalysed reaction is phosphate(out) + ATP + H2O = ADP + 2 phosphate(in) + H(+). Part of the ABC transporter complex PstSACB involved in phosphate import. Responsible for energy coupling to the transport system. The chain is Phosphate import ATP-binding protein PstB from Thermus thermophilus (strain ATCC 27634 / DSM 579 / HB8).